The chain runs to 173 residues: FVQSALSQCLGRVDRRIIGGCGLEAPFAWDGALGWDGLRGWDAPYGCGLAAPAIDFSPTSGGALPVSSASAIAPVGLAVASENVYEGILAAAGELPFVGTVGVEGILPTAGAGAVHHSCGNGLNEMASRDAAFVPRFADAYGIGLGAYGLEVPVLGAPALGYRAGWKGCGCGL.

The first 7 residues, 1 to 7 (FVQSALS), serve as a signal peptide directing secretion.

It belongs to the chorion protein family.

Functionally, this protein is one of many from the eggshell of the gypsy moth. The protein is Chorion class B protein Ld32 of Lymantria dispar (Gypsy moth).